A 429-amino-acid chain; its full sequence is MKKVLAIILGGGAGTRLYPLTKLRAKPAVPVAGKYRLIDIPVSNCINSEIFKIYVLTQFNSASLNRHIARTYNFSGFSEGFVEVLAAQQTPENPNWFQGTADAVRQYLWMLQEWDVDEFLILSGDHLYRMDYRLFIQRHRETNADITLSVIPIDDRRASDFGLMKIDNSGRVIDFSEKPKGEALTKMRVDTTVLGLTPEQAASQPYIASMGIYVFKKDVLIKLLKEALERTDFGKEIIPDAAKDHNVQAYLFDDYWEDIGTIEAFYNANLALTQQPMPPFSFYDEEAPIYTRARYLPPTKLLDCHVTESIIGEGCILKNCRIQHSVLGVRSRIETGCMIEESLLMGADFYQASVERQCSIDKGDIPVGIGPDTIIRRAIIDKNARIGHDVKIINKDNVQEADRESQGFYIRSGIVVVLKNAVITDGTII.

Alpha-D-glucose 1-phosphate-binding positions include G162, 177-178 (EK), and S209.

The protein belongs to the bacterial/plant glucose-1-phosphate adenylyltransferase family. In terms of assembly, homotetramer.

It catalyses the reaction alpha-D-glucose 1-phosphate + ATP + H(+) = ADP-alpha-D-glucose + diphosphate. Its pathway is glycan biosynthesis; glycogen biosynthesis. With respect to regulation, activated by 3-phosphoglycerate and inhibited by phosphate. Functionally, involved in the biosynthesis of ADP-glucose, a building block required for the elongation reactions to produce glycogen. Catalyzes the reaction between ATP and alpha-D-glucose 1-phosphate (G1P) to produce pyrophosphate and ADP-Glc. In Nostoc sp. (strain PCC 7120 / SAG 25.82 / UTEX 2576), this protein is Glucose-1-phosphate adenylyltransferase.